Reading from the N-terminus, the 248-residue chain is Kallikrein-12 (248 aa).

The first 17 residues, 1–17 (MGLSIFLLLCVLGLSQA), serve as a signal peptide directing secretion. Positions 22-246 (IFNGTECGRN…YVDWIRMIMR (225 aa)) constitute a Peptidase S1 domain. N-linked (GlcNAc...) asparagine glycosylation occurs at Asn24. 6 cysteine pairs are disulfide-bonded: Cys28–Cys161, Cys47–Cys63, Cys133–Cys235, Cys140–Cys206, Cys172–Cys186, and Cys196–Cys222. Residues His62 and Asp108 each act as charge relay system in the active site. Asn163 is a glycosylation site (N-linked (GlcNAc...) asparagine). Ser200 acts as the Charge relay system in catalysis.

Belongs to the peptidase S1 family. Kallikrein subfamily.

It localises to the secreted. The polypeptide is Kallikrein-12 (KLK12) (Homo sapiens (Human)).